Reading from the N-terminus, the 349-residue chain is T-cell immunoglobulin and mucin domain-containing protein 2 (349 aa).

An N-terminal signal peptide occupies residues 1–20; it reads MVQLQVFISGLLLLLPGAVA. Over 21–275 the chain is Extracellular; it reads SYTVVQGHSV…QKLQRNPTKG (255 aa). One can recognise an Ig-like V-type domain in the interval 22 to 123; that stretch reads YTVVQGHSVT…AFYFVDYLLE (102 aa). 3 disulfides stabilise this stretch: Cys34–Cys107, Cys48–Cys59, and Cys54–Cys106. Asn84 and Asn89 each carry an N-linked (GlcNAc...) asparagine glycan. The tract at residues 128–271 is disordered; sequence LPTSPPTRPT…AIPPQKLQRN (144 aa). Low complexity predominate over residues 136–215; that stretch reads PTNTGRPTTT…TSTPPTPEQT (80 aa). Residues 222-260 show a composition bias toward polar residues; it reads ATTYYPDQTTAEVTEAPSHTPTDWNNTATSSDDSWNSDT. The helical transmembrane segment at 276 to 296 threads the bilayer; sequence FYVGMSFAALLLLLLASTVAI. Residues 297 to 349 are Cytoplasmic-facing; sequence TRYMVMRKNSGSLRFVAFPVSKIGASQNKVVEQARIEDEVYIIEDSPYFEEES.

It belongs to the immunoglobulin superfamily. TIM family. As to quaternary structure, homodimer.

Its subcellular location is the cell membrane. In terms of biological role, probable receptor for SEMA4A involved in the regulation of T-cell function. The interaction with SEMA4A enhances T-cell activation. In Rattus norvegicus (Rat), this protein is T-cell immunoglobulin and mucin domain-containing protein 2 (Timd2).